Consider the following 518-residue polypeptide: Homoserine O-acetyltransferase (518 aa).

Residues 69–468 (NVMVICHALT…DSPEGHDAFL (400 aa)) enclose the AB hydrolase-1 domain. Residue S182 is part of the active site. Residue S182 is the Nucleophile of the active site. A disordered region spans residues 267-365 (RFGRNIPDPS…PNSVSDPFRP (99 aa)). The segment covering 290–303 (PAEEHYDIHNEGFR) has biased composition (basic and acidic residues). Residues 310 to 341 (RSSTTTSDAPPSPTRTSSTSSTDAITPASTTP) show a composition bias toward low complexity. Catalysis depends on residues D435 and H464.

It belongs to the AB hydrolase superfamily. MetX family.

It catalyses the reaction L-homoserine + acetyl-CoA = O-acetyl-L-homoserine + CoA. Its pathway is amino-acid biosynthesis; L-methionine biosynthesis via de novo pathway; O-acetyl-L-homoserine from L-homoserine: step 1/1. Its function is as follows. Commits homoserine to the methionine biosynthesis pathway by catalyzing its O-acetylation. The polypeptide is Homoserine O-acetyltransferase (MET2) (Ascobolus immersus).